A 349-amino-acid chain; its full sequence is Anthranilate phosphoribosyltransferase (349 aa).

5-phospho-alpha-D-ribose 1-diphosphate contacts are provided by residues glycine 82, 85–86 (GD), 92–95 (NVST), 110–118 (KHGNRAVSG), and serine 122. Glycine 82 provides a ligand contact to anthranilate. Residue serine 94 coordinates Mg(2+). Residue asparagine 113 participates in anthranilate binding. Arginine 168 lines the anthranilate pocket. Positions 227 and 228 each coordinate Mg(2+).

The protein belongs to the anthranilate phosphoribosyltransferase family. As to quaternary structure, homodimer. Requires Mg(2+) as cofactor.

It catalyses the reaction N-(5-phospho-beta-D-ribosyl)anthranilate + diphosphate = 5-phospho-alpha-D-ribose 1-diphosphate + anthranilate. It participates in amino-acid biosynthesis; L-tryptophan biosynthesis; L-tryptophan from chorismate: step 2/5. Its function is as follows. Catalyzes the transfer of the phosphoribosyl group of 5-phosphorylribose-1-pyrophosphate (PRPP) to anthranilate to yield N-(5'-phosphoribosyl)-anthranilate (PRA). This is Anthranilate phosphoribosyltransferase from Pseudomonas putida (strain ATCC 700007 / DSM 6899 / JCM 31910 / BCRC 17059 / LMG 24140 / F1).